A 436-amino-acid chain; its full sequence is MMRARVPLLLLGILFLASLSASFATSLREEEESQDNPFYFNSDNSWNTLFKNQYGHIRVLQRFDQQSKRLQNLEDYRLVEFRSKPETLLLPQQADAELLLVVRSGSAILVLVKPDDRREYFFLTQGDNPIFSDNQKIPAGTIFYLVNPDPKEDLRIIQLAMPVNNPQIHEFFLSSTEAQQSYLQEFSKHILEASFNSKFEEINRVLFEEEGQQEEGQQEGVIVNIDSEQIEELSKHAKSSSRKSHSKQDNTIGNEFGNLTERTDNSLNVLISSIEMKEGALFVPHYYSKAIVILVVNEGEAHVELVGPKGNKETLEFESYRAELSKDDVFVIPAAYPVAIKATSNVNFTGFGINANNNNRNLLAGKTDNVISSIGRALDGKDVLGLTFSGSGEEVMKLINKQSGSYFVDGHHHQQEQQKGSHQQEQQKGRKGAFVY.

An N-terminal signal peptide occupies residues 1–24 (MMRARVPLLLLGILFLASLSASFA). The tract at residues 233-257 (LSKHAKSSSRKSHSKQDNTIGNEFG) is disordered. Over residues 236 to 245 (HAKSSSRKSH) the composition is skewed to basic residues. Residues 245–396 (HSKQDNTIGN…TFSGSGEEVM (152 aa)) enclose the Cupin type-1 domain. N-linked (GlcNAc...) (complex) asparagine; alternate glycosylation is present at Asn258. Asn258 is a glycosylation site (N-linked (GlcNAc...) (high mannose) asparagine; alternate). Asn347 carries N-linked (GlcNAc...) (high mannose) asparagine glycosylation. Positions 411–436 (HHHQQEQQKGSHQQEQQKGRKGAFVY) are disordered. Residues 417–426 (QQKGSHQQEQ) show a composition bias toward low complexity.

The protein belongs to the 7S seed storage protein family. As to quaternary structure, homotrimer. In terms of processing, N-glycosylated; glycans consist in Man9(GlcNAc)2 and Man7(GlcNAc)2 when dually glycosylated at Asn-258 and Asn-347, whereas it consists in Xyl-Man3(GlcNAc)2 when solely glycosylated at Asn-258.

It localises to the vacuole. The protein localises to the aleurone grain. Functionally, major seed storage protein. The protein is Phaseolin, alpha-type of Phaseolus vulgaris (Kidney bean).